The sequence spans 238 residues: Ubiquinone biosynthesis O-methyltransferase (238 aa).

S-adenosyl-L-methionine-binding residues include Arg40, Gly59, Asp81, and Met126.

This sequence belongs to the methyltransferase superfamily. UbiG/COQ3 family.

It carries out the reaction a 3-demethylubiquinol + S-adenosyl-L-methionine = a ubiquinol + S-adenosyl-L-homocysteine + H(+). The catalysed reaction is a 3-(all-trans-polyprenyl)benzene-1,2-diol + S-adenosyl-L-methionine = a 2-methoxy-6-(all-trans-polyprenyl)phenol + S-adenosyl-L-homocysteine + H(+). Its pathway is cofactor biosynthesis; ubiquinone biosynthesis. Its function is as follows. O-methyltransferase that catalyzes the 2 O-methylation steps in the ubiquinone biosynthetic pathway. The protein is Ubiquinone biosynthesis O-methyltransferase of Neisseria meningitidis serogroup A / serotype 4A (strain DSM 15465 / Z2491).